The primary structure comprises 204 residues: Superoxide dismutase [Mn] (204 aa).

The Mn(2+) site is built by H29, H84, D167, and H171.

Belongs to the iron/manganese superoxide dismutase family. In terms of assembly, homotetramer. Mn(2+) serves as cofactor.

The catalysed reaction is 2 superoxide + 2 H(+) = H2O2 + O2. In terms of biological role, destroys superoxide anion radicals which are normally produced within the cells and which are toxic to biological systems. In Thermus aquaticus, this protein is Superoxide dismutase [Mn] (sodA).